The following is a 237-amino-acid chain: Phosphoribosylaminoimidazole-succinocarboxamide synthase (237 aa).

It belongs to the SAICAR synthetase family.

It carries out the reaction 5-amino-1-(5-phospho-D-ribosyl)imidazole-4-carboxylate + L-aspartate + ATP = (2S)-2-[5-amino-1-(5-phospho-beta-D-ribosyl)imidazole-4-carboxamido]succinate + ADP + phosphate + 2 H(+). The protein operates within purine metabolism; IMP biosynthesis via de novo pathway; 5-amino-1-(5-phospho-D-ribosyl)imidazole-4-carboxamide from 5-amino-1-(5-phospho-D-ribosyl)imidazole-4-carboxylate: step 1/2. This Cronobacter sakazakii (strain ATCC BAA-894) (Enterobacter sakazakii) protein is Phosphoribosylaminoimidazole-succinocarboxamide synthase.